The sequence spans 308 residues: Lipoyl synthase 2 (308 aa).

7 residues coordinate [4Fe-4S] cluster: Cys-49, Cys-54, Cys-60, Cys-75, Cys-79, Cys-82, and Ser-300. Residues 61–289 form the Radical SAM core domain; the sequence is YASGTATFLL…KRIAEGLGFK (229 aa).

This sequence belongs to the radical SAM superfamily. Lipoyl synthase family. [4Fe-4S] cluster is required as a cofactor.

It is found in the cytoplasm. The enzyme catalyses [[Fe-S] cluster scaffold protein carrying a second [4Fe-4S](2+) cluster] + N(6)-octanoyl-L-lysyl-[protein] + 2 oxidized [2Fe-2S]-[ferredoxin] + 2 S-adenosyl-L-methionine + 4 H(+) = [[Fe-S] cluster scaffold protein] + N(6)-[(R)-dihydrolipoyl]-L-lysyl-[protein] + 4 Fe(3+) + 2 hydrogen sulfide + 2 5'-deoxyadenosine + 2 L-methionine + 2 reduced [2Fe-2S]-[ferredoxin]. The protein operates within protein modification; protein lipoylation via endogenous pathway; protein N(6)-(lipoyl)lysine from octanoyl-[acyl-carrier-protein]: step 2/2. Catalyzes the radical-mediated insertion of two sulfur atoms into the C-6 and C-8 positions of the octanoyl moiety bound to the lipoyl domains of lipoate-dependent enzymes, thereby converting the octanoylated domains into lipoylated derivatives. In Prochlorococcus marinus (strain SARG / CCMP1375 / SS120), this protein is Lipoyl synthase 2.